A 299-amino-acid chain; its full sequence is Protease HtpX homolog (299 aa).

2 helical membrane passes run 19–39 (LFIV…VWYF) and 41–61 (WGIT…WIAY). Zn(2+) is bound at residue His146. Glu147 is an active-site residue. Position 150 (His150) interacts with Zn(2+). The next 2 membrane-spanning stretches (helical) occupy residues 156 to 176 (ILLM…RDVF) and 198 to 218 (IILL…VLII). A Zn(2+)-binding site is contributed by Glu227.

The protein belongs to the peptidase M48B family. Zn(2+) is required as a cofactor.

Its subcellular location is the cell membrane. The chain is Protease HtpX homolog from Caldanaerobacter subterraneus subsp. tengcongensis (strain DSM 15242 / JCM 11007 / NBRC 100824 / MB4) (Thermoanaerobacter tengcongensis).